The sequence spans 112 residues: Small ribosomal subunit protein uS17 (112 aa).

This sequence belongs to the universal ribosomal protein uS17 family. Part of the 30S ribosomal subunit.

Its function is as follows. One of the primary rRNA binding proteins, it binds specifically to the 5'-end of 16S ribosomal RNA. The chain is Small ribosomal subunit protein uS17 from Thermotoga neapolitana (strain ATCC 49049 / DSM 4359 / NBRC 107923 / NS-E).